The following is a 575-amino-acid chain: uncharacterized protein (575 aa).

The next 6 membrane-spanning stretches (helical) occupy residues 16-36 (FFLD…FPLI), 50-70 (WGLI…SSAL), 132-152 (PEDL…MLFI), 154-174 (WQLA…ALYF), 243-263 (ISYM…TWFV), and 264-284 (IRGS…NVLF). In terms of domain architecture, ABC transmembrane type-1 spans 16–299 (FFLDFFSAIA…INAIIEMYPR (284 aa)). The 235-residue stretch at 333 to 567 (IRYKHVSFGY…GGLYSRLHQA (235 aa)) folds into the ABC transporter domain. 366 to 373 (GPSGAGKS) contributes to the ATP binding site.

The protein belongs to the ABC transporter superfamily.

It localises to the cell membrane. The protein resides in the membrane raft. This is an uncharacterized protein from Bacillus subtilis (strain 168).